Consider the following 385-residue polypeptide: Probable alpha-galactosidase (385 aa).

Positions 1-19 (MMKIAATLLATIALATVNA) are cleaved as a signal peptide. 2 disulfide bridges follow: C40-C72 and C119-C149. Residue D147 is the Nucleophile of the active site. Position 180-184 (180-184 (DWGYE)) interacts with substrate. D202 functions as the Proton donor in the catalytic mechanism.

This sequence belongs to the glycosyl hydrolase 27 family.

The catalysed reaction is Hydrolysis of terminal, non-reducing alpha-D-galactose residues in alpha-D-galactosides, including galactose oligosaccharides, galactomannans and galactolipids.. The protein is Probable alpha-galactosidase (melA) of Dictyostelium discoideum (Social amoeba).